The chain runs to 134 residues: Profilin-3 (134 aa).

A disulfide bridge links Cys-13 with Cys-118. The Involved in PIP2 interaction signature appears at 84–100 (AVIRGKKGSGGITIKKT). The residue at position 114 (Thr-114) is a Phosphothreonine.

This sequence belongs to the profilin family. Occurs in many kinds of cells as a complex with monomeric actin in a 1:1 ratio. Phosphorylated by MAP kinases.

It localises to the cytoplasm. Its subcellular location is the cytoskeleton. In terms of biological role, binds to actin and affects the structure of the cytoskeleton. At high concentrations, profilin prevents the polymerization of actin, whereas it enhances it at low concentrations. The protein is Profilin-3 of Olea europaea (Common olive).